We begin with the raw amino-acid sequence, 70 residues long: Large ribosomal subunit protein eL38 (70 aa).

Lys-4 is covalently cross-linked (Glycyl lysine isopeptide (Lys-Gly) (interchain with G-Cter in SUMO2)). N6-acetyllysine; alternate is present on Lys-9. Residue Lys-9 forms a Glycyl lysine isopeptide (Lys-Gly) (interchain with G-Cter in SUMO2); alternate linkage. The residue at position 67 (Lys-67) is an N6-acetyllysine.

It belongs to the eukaryotic ribosomal protein eL38 family. Component of the large ribosomal subunit.

The protein resides in the cytoplasm. Functionally, component of the large ribosomal subunit. The ribosome is a large ribonucleoprotein complex responsible for the synthesis of proteins in the cell. This Mus musculus (Mouse) protein is Large ribosomal subunit protein eL38 (Rpl38).